Reading from the N-terminus, the 97-residue chain is Aspartyl/glutamyl-tRNA(Asn/Gln) amidotransferase subunit C (97 aa).

Belongs to the GatC family. Heterotrimer of A, B and C subunits.

The enzyme catalyses L-glutamyl-tRNA(Gln) + L-glutamine + ATP + H2O = L-glutaminyl-tRNA(Gln) + L-glutamate + ADP + phosphate + H(+). It catalyses the reaction L-aspartyl-tRNA(Asn) + L-glutamine + ATP + H2O = L-asparaginyl-tRNA(Asn) + L-glutamate + ADP + phosphate + 2 H(+). Functionally, allows the formation of correctly charged Asn-tRNA(Asn) or Gln-tRNA(Gln) through the transamidation of misacylated Asp-tRNA(Asn) or Glu-tRNA(Gln) in organisms which lack either or both of asparaginyl-tRNA or glutaminyl-tRNA synthetases. The reaction takes place in the presence of glutamine and ATP through an activated phospho-Asp-tRNA(Asn) or phospho-Glu-tRNA(Gln). This Thermosynechococcus vestitus (strain NIES-2133 / IAM M-273 / BP-1) protein is Aspartyl/glutamyl-tRNA(Asn/Gln) amidotransferase subunit C.